The primary structure comprises 127 residues: Fluoride-specific ion channel FluC (127 aa).

4 consecutive transmembrane segments (helical) span residues 4-24 (LLLAVFIGGGTGSVARWMLSM), 35-55 (IGTLTANLLGAFIIGMGFAWF), 71-91 (TGFCGGLTTFSTFSAEVVFLL), and 103-123 (VLINLLGSFAMTALAFWLFSA). Positions 75 and 78 each coordinate Na(+).

The protein belongs to the fluoride channel Fluc/FEX (TC 1.A.43) family.

Its subcellular location is the cell inner membrane. The enzyme catalyses fluoride(in) = fluoride(out). With respect to regulation, na(+) is not transported, but it plays an essential structural role and its presence is essential for fluoride channel function. In terms of biological role, fluoride-specific ion channel. Important for reducing fluoride concentration in the cell, thus reducing its toxicity. In Salmonella agona (strain SL483), this protein is Fluoride-specific ion channel FluC.